Consider the following 327-residue polypeptide: D-alanine--D-alanine ligase (327 aa).

Positions 113-312 (KRLWMTHGLA…YEDFVLQVLA (200 aa)) constitute an ATP-grasp domain. An ATP-binding site is contributed by 139 to 194 (VADLGLPLIVKPAREGSSIGLTKVTAADQMRAAFDKAAALDNDVIAETFVDGAELT). Residues Asp266, Glu279, and Asn281 each coordinate Mg(2+).

Belongs to the D-alanine--D-alanine ligase family. Mg(2+) serves as cofactor. Requires Mn(2+) as cofactor.

It localises to the cytoplasm. It catalyses the reaction 2 D-alanine + ATP = D-alanyl-D-alanine + ADP + phosphate + H(+). It functions in the pathway cell wall biogenesis; peptidoglycan biosynthesis. Its function is as follows. Cell wall formation. The protein is D-alanine--D-alanine ligase of Cupriavidus taiwanensis (strain DSM 17343 / BCRC 17206 / CCUG 44338 / CIP 107171 / LMG 19424 / R1) (Ralstonia taiwanensis (strain LMG 19424)).